We begin with the raw amino-acid sequence, 477 residues long: Ankyrin repeat, SAM and basic leucine zipper domain-containing protein 1 (477 aa).

Residues 1 to 24 (MAASSLWGPAVAGGGESSESEDDG) are disordered. Phosphoserine is present on residues Ser17, Ser18, and Ser20. ANK repeat units lie at residues 45 to 74 (EKNE…SVDS), 78 to 107 (YGWT…NASF), 110 to 144 (DKQT…DPNV), 148 to 177 (RQMT…EVNA), 181 to 210 (NGYT…NKML), and 214 to 243 (DGKT…PLEG). One can recognise an SAM domain in the interval 272 to 334 (SYTAFGELDL…KILSALKELM (63 aa)).

In terms of assembly, interacts with DDX4, PIWIL1, RANBP9 and TDRD1.

Its subcellular location is the cytoplasm. Plays a central role during spermatogenesis by repressing transposable elements and preventing their mobilization, which is essential for the germline integrity. Acts via the piRNA metabolic process, which mediates the repression of transposable elements during meiosis by forming complexes composed of piRNAs and Piwi proteins and governs the methylation and subsequent repression of transposons. Its association with pi-bodies suggests a participation in the primary piRNAs metabolic process. Required prior to the pachytene stage to facilitate the production of multiple types of piRNAs, including those associated with repeats involved in the regulation of retrotransposons. May act by mediating protein-protein interactions during germ cell maturation. The polypeptide is Ankyrin repeat, SAM and basic leucine zipper domain-containing protein 1 (ASZ1) (Echinops telfairi (Lesser hedgehog tenrec)).